The following is a 204-amino-acid chain: Tat proofreading chaperone DmsD (204 aa).

Belongs to the TorD/DmsD family. DmsD subfamily. As to quaternary structure, monomer in solution.

Required for biogenesis/assembly of DMSO reductase, but not for the interaction of the DmsA signal peptide with the Tat system. May be part of a chaperone cascade complex that facilitates a folding-maturation pathway for the substrate protein. The sequence is that of Tat proofreading chaperone DmsD from Salmonella typhimurium (strain LT2 / SGSC1412 / ATCC 700720).